The primary structure comprises 260 residues: MSTNNSVLVLKVGGALLQCEMGMARLMDTAAAMIANGQQVLMVHGGGCLVDEQLAANGMETVKLEGLRVTPPEQMPIIAGALAGTSNKILQGAATKAGIVSIGMSLADGNTVSAKIKDERLGLVGEVSPKDATYLKFILSQGWMPICSSIAMMDDGQMLNVNADQAATVLAKLVGGKLVLLSDVSGVLDGKGQLIPSLNGKQIADLVKQGVIEKGMKVKVEAALEVAQWMGQAVQVASWRDASQLVALAKGEAVGTQIQP.

Residues 46-47 (GG), Arg-68, and Asn-160 contribute to the substrate site.

This sequence belongs to the acetylglutamate kinase family. ArgB subfamily.

The protein localises to the cytoplasm. It carries out the reaction N-acetyl-L-glutamate + ATP = N-acetyl-L-glutamyl 5-phosphate + ADP. It participates in amino-acid biosynthesis; L-arginine biosynthesis; N(2)-acetyl-L-ornithine from L-glutamate: step 2/4. In terms of biological role, catalyzes the ATP-dependent phosphorylation of N-acetyl-L-glutamate. This Shewanella sp. (strain ANA-3) protein is Acetylglutamate kinase.